The sequence spans 130 residues: Glycine cleavage system H protein (130 aa).

The 82-residue stretch at 25–106 folds into the Lipoyl-binding domain; that stretch reads TALIGISDFA…PFDSWMIKVK (82 aa). K66 bears the N6-lipoyllysine mark.

This sequence belongs to the GcvH family. The glycine cleavage system is composed of four proteins: P, T, L and H. (R)-lipoate serves as cofactor.

Its function is as follows. The glycine cleavage system catalyzes the degradation of glycine. The H protein shuttles the methylamine group of glycine from the P protein to the T protein. This Leptospira borgpetersenii serovar Hardjo-bovis (strain JB197) protein is Glycine cleavage system H protein.